We begin with the raw amino-acid sequence, 338 residues long: MSTLRLLISDSYDPWFNLAVEECIFRQMPATQRVLFLWRNADTVVIGRAQNPWKECNTRRMEEDNVRLARRSSGGGAVFHDLGNTCFTFMAGKPEYDKTISTSIVLNALNALGVSAEASGRNDLVVKTVEGDRKVSGSAYRETKDRGFHHGTLLLNADLSRLANYLNPDKKKLAAKGITSVRSRVTNLTELLPGITHEQVCEAITEAFFAHYGERVEAEIISPNKTPDLPNFAETFARQSSWEWNFGQAPAFSHLLDERFTWGGVELHFDVEKGHITRAQVFTDSLNPAPLEALAGRLQGCLYRADMLQQECEALLVDFPEQEKELRELSAWMAGAVR.

Residues 29–216 enclose the BPL/LPL catalytic domain; the sequence is PATQRVLFLW…AFFAHYGERV (188 aa). Residues Arg-71, 76-79, and Lys-134 each bind ATP; that span reads GAVF. Lys-134 contacts (R)-lipoate.

It belongs to the LplA family. In terms of assembly, monomer.

The protein resides in the cytoplasm. The catalysed reaction is L-lysyl-[lipoyl-carrier protein] + (R)-lipoate + ATP = N(6)-[(R)-lipoyl]-L-lysyl-[lipoyl-carrier protein] + AMP + diphosphate + H(+). Its pathway is protein modification; protein lipoylation via exogenous pathway; protein N(6)-(lipoyl)lysine from lipoate: step 1/2. It participates in protein modification; protein lipoylation via exogenous pathway; protein N(6)-(lipoyl)lysine from lipoate: step 2/2. Catalyzes both the ATP-dependent activation of exogenously supplied lipoate to lipoyl-AMP and the transfer of the activated lipoyl onto the lipoyl domains of lipoate-dependent enzymes. In Escherichia coli (strain K12 / MC4100 / BW2952), this protein is Lipoate-protein ligase A.